We begin with the raw amino-acid sequence, 97 residues long: NELL2-interacting cell ontogeny regulator 1 (97 aa).

The signal sequence occupies residues 1 to 35 (MAPLPPCGPPRSPPPRLLLLLLLLSATLLGAPARA).

The protein belongs to the NICOL family. Interacts with NELL2; triggers epididymal differentiation. Interacts with cell surface receptor TFRC; the interaction mediates uptake of NICOL1 into fibroblasts.

The protein localises to the secreted. The protein resides in the cytoplasm. Its subcellular location is the perinuclear region. Its function is as follows. mRNA-binding protein which interacts with a range of target mRNAs including SERPINE1, ACTA2, CCN2 and COL4A1 and may promote extracellular matrix production. Binds to the 3'-UTR of SERPINE1 mRNA and stabilizes the mRNA, possibly by competing for binding with SERBP1 and preventing SERBP1-mediated mRNA degradation. Also binds to the 3'-UTR of ACTA2. Testis-derived lumicrine factor that triggers epididymal differentiation and sperm maturation. The sequence is that of NELL2-interacting cell ontogeny regulator 1 from Bos taurus (Bovine).